Consider the following 148-residue polypeptide: UPF0178 protein LPC_0108 (148 aa).

This sequence belongs to the UPF0178 family.

This is UPF0178 protein LPC_0108 from Legionella pneumophila (strain Corby).